The primary structure comprises 370 residues: Sphingolipid delta(4)-desaturase (370 aa).

A run of 3 helical transmembrane segments spans residues 68-88 (VMGV…TPVF), 92-112 (FLTL…LAIH), and 128-148 (LFAV…FQPY). Residues 112-116 (HELSH) carry the Histidine box-1 motif. A Histidine box-2 motif is present at residues 149–153 (HQLHH). The next 3 helical transmembrane spans lie at 173-193 (FLSS…FYAL), 197-217 (FITQ…QLIF), and 220-240 (VMVT…TFLA). Positions 299-303 (HNEHH) match the Histidine box-3 motif.

Belongs to the fatty acid desaturase type 1 family. DEGS subfamily.

Its subcellular location is the membrane. It carries out the reaction an N-acylsphinganine + 2 Fe(II)-[cytochrome b5] + O2 + 2 H(+) = an N-acylsphing-4-enine + 2 Fe(III)-[cytochrome b5] + 2 H2O. Its pathway is lipid metabolism; sphingolipid metabolism. Functionally, delta(4)-fatty-acid desaturase which introduces a double bond at the 4-position in the long-chain base (LCB) of ceramides. Required for the formation of the monounsaturated sphingoid base (E)-sphing-4-enine during glucosylceramide (GluCer) biosynthesis. The chain is Sphingolipid delta(4)-desaturase from Candida albicans (strain SC5314 / ATCC MYA-2876) (Yeast).